Here is a 475-residue protein sequence, read N- to C-terminus: ATP synthase subunit beta (475 aa).

Gly153–Thr160 contacts ATP.

The protein belongs to the ATPase alpha/beta chains family. As to quaternary structure, F-type ATPases have 2 components, CF(1) - the catalytic core - and CF(0) - the membrane proton channel. CF(1) has five subunits: alpha(3), beta(3), gamma(1), delta(1), epsilon(1). CF(0) has three main subunits: a(1), b(2) and c(9-12). The alpha and beta chains form an alternating ring which encloses part of the gamma chain. CF(1) is attached to CF(0) by a central stalk formed by the gamma and epsilon chains, while a peripheral stalk is formed by the delta and b chains.

The protein localises to the cell membrane. It catalyses the reaction ATP + H2O + 4 H(+)(in) = ADP + phosphate + 5 H(+)(out). Produces ATP from ADP in the presence of a proton gradient across the membrane. The catalytic sites are hosted primarily by the beta subunits. In Limosilactobacillus reuteri (strain DSM 20016) (Lactobacillus reuteri), this protein is ATP synthase subunit beta.